A 165-amino-acid polypeptide reads, in one-letter code: 5-formyltetrahydrofolate cyclo-ligase (165 aa).

4–8 provides a ligand contact to ATP; the sequence is KNSLR. 2 residues coordinate substrate: Ile-51 and Glu-56. Position 116–124 (116–124) interacts with ATP; sequence RIGFGKGYY. Asp-125 is a binding site for Mg(2+). Arg-126 and Trp-154 together coordinate ATP. Asp-155 provides a ligand contact to Mg(2+).

This sequence belongs to the 5-formyltetrahydrofolate cyclo-ligase family. Monomer or homodimer. Mg(2+) is required as a cofactor.

It localises to the cytoplasm. It carries out the reaction (6S)-5-formyl-5,6,7,8-tetrahydrofolate + ATP = (6R)-5,10-methenyltetrahydrofolate + ADP + phosphate. Its function is as follows. Involved in folate metabolism. Catalyzes the irreversible conversion of 5-formyltetrahydrofolate (5-FTHF) to yield 5,10-methenyltetrahydrofolate. In Mycoplasma genitalium (strain ATCC 33530 / DSM 19775 / NCTC 10195 / G37) (Mycoplasmoides genitalium), this protein is 5-formyltetrahydrofolate cyclo-ligase.